The sequence spans 144 residues: Large ribosomal subunit protein uL15 (144 aa).

A disordered region spans residues 1 to 49; sequence MIKLECLQDPSPRKRRTKLLGRGPSSGHGKTSSRGHKGDCSRSGYKRRF.

The protein belongs to the universal ribosomal protein uL15 family. As to quaternary structure, part of the 50S ribosomal subunit.

Binds to the 23S rRNA. The sequence is that of Large ribosomal subunit protein uL15 from Chlamydia trachomatis serovar A (strain ATCC VR-571B / DSM 19440 / HAR-13).